A 46-amino-acid chain; its full sequence is Protein PsbN (46 aa).

The chain crosses the membrane as a helical span at residues 7-27 (ALSVAIGVLAVLFGLTGFGVY).

This sequence belongs to the PsbN family.

It is found in the cellular thylakoid membrane. Its function is as follows. May play a role in photosystem I and II biogenesis. This is Protein PsbN from Synechococcus sp. (strain CC9605).